Consider the following 227-residue polypeptide: GFP-like non-fluorescent chromoprotein (227 aa).

Residues 63 to 65 (EYG) constitute a cross-link (2-iminomethyl-5-imidazolinone (Glu-Gly)). A 2,3-didehydrotyrosine modification is found at Tyr-64.

It belongs to the GFP family. In terms of assembly, homotetramer. Contains a chromophore consisting of modified amino acid residues. The chromophore is formed by autocatalytic backbone condensation between Xaa-N and Gly-(N+2), oxidation of Tyr-(N+1) to didehydrotyrosine, and formation of a double bond to the alpha-amino nitrogen of residue Xaa-N. Maturation of the chromophore requires nothing other than molecular oxygen. The precise stereochemistry of the tyrosine has not been determined.

Its function is as follows. Non-fluorescent pigment protein that is lilac in color. The chain is GFP-like non-fluorescent chromoprotein from Radianthus crispa (Leathery sea anemone).